An 842-amino-acid chain; its full sequence is Alanine--tRNA ligase (842 aa).

Positions 549, 553, 650, and 654 each coordinate Zn(2+).

It belongs to the class-II aminoacyl-tRNA synthetase family. It depends on Zn(2+) as a cofactor.

Its subcellular location is the cytoplasm. The enzyme catalyses tRNA(Ala) + L-alanine + ATP = L-alanyl-tRNA(Ala) + AMP + diphosphate. Catalyzes the attachment of alanine to tRNA(Ala) in a two-step reaction: alanine is first activated by ATP to form Ala-AMP and then transferred to the acceptor end of tRNA(Ala). Also edits incorrectly charged Ser-tRNA(Ala) and Gly-tRNA(Ala) via its editing domain. The polypeptide is Alanine--tRNA ligase (Campylobacter jejuni subsp. jejuni serotype O:2 (strain ATCC 700819 / NCTC 11168)).